A 401-amino-acid polypeptide reads, in one-letter code: Chalcone synthase 5 (401 aa).

Cysteine 168 is an active-site residue.

This sequence belongs to the thiolase-like superfamily. Chalcone/stilbene synthases family.

It catalyses the reaction (E)-4-coumaroyl-CoA + 3 malonyl-CoA + 3 H(+) = 2',4,4',6'-tetrahydroxychalcone + 3 CO2 + 4 CoA. It participates in secondary metabolite biosynthesis; flavonoid biosynthesis. The primary product of this enzyme is 4,2',4',6'-tetrahydroxychalcone (also termed naringenin-chalcone or chalcone) which can under specific conditions spontaneously isomerize into naringenin. In Sorghum bicolor (Sorghum), this protein is Chalcone synthase 5 (CHS5).